Consider the following 161-residue polypeptide: Endoribonuclease YbeY (161 aa).

Positions 121, 125, and 131 each coordinate Zn(2+).

This sequence belongs to the endoribonuclease YbeY family. Zn(2+) is required as a cofactor.

The protein resides in the cytoplasm. Single strand-specific metallo-endoribonuclease involved in late-stage 70S ribosome quality control and in maturation of the 3' terminus of the 16S rRNA. This Xanthomonas oryzae pv. oryzae (strain MAFF 311018) protein is Endoribonuclease YbeY.